Consider the following 250-residue polypeptide: Hydroxyacylglutathione hydrolase (250 aa).

Residues His53, His55, Asp57, His58, His110, Asp127, and His165 each contribute to the Zn(2+) site.

This sequence belongs to the metallo-beta-lactamase superfamily. Glyoxalase II family. Monomer. Zn(2+) serves as cofactor.

The enzyme catalyses an S-(2-hydroxyacyl)glutathione + H2O = a 2-hydroxy carboxylate + glutathione + H(+). It functions in the pathway secondary metabolite metabolism; methylglyoxal degradation; (R)-lactate from methylglyoxal: step 2/2. Functionally, thiolesterase that catalyzes the hydrolysis of S-D-lactoyl-glutathione to form glutathione and D-lactic acid. In Buchnera aphidicola subsp. Schizaphis graminum (strain Sg), this protein is Hydroxyacylglutathione hydrolase.